The chain runs to 202 residues: Amelogenin (202 aa).

S16 carries the phosphoserine modification. A disordered region spans residues 77 to 202; the sequence is QPAPPQQPVM…TDKTKREEVD (126 aa). The span at 78 to 87 shows a compositional bias: pro residues; the sequence is PAPPQQPVMP. Residues 101–112 are compositionally biased toward low complexity; that stretch reads QPNLPQPGQQPY. Residues 113-125 are compositionally biased toward pro residues; it reads QPQPAQQPQPHQP. Residues 126 to 158 show a composition bias toward low complexity; the sequence is IQPIQPIQPIQPMQPMQPMQPMQPMQPMQPQTP. The segment covering 164–176 has biased composition (pro residues); the sequence is PLPPQPPLPPMFP.

Belongs to the amelogenin family.

It is found in the secreted. It localises to the extracellular space. The protein resides in the extracellular matrix. Its function is as follows. Plays a role in the biomineralization of teeth. Seems to regulate the formation of crystallites during the secretory stage of tooth enamel development. Thought to play a major role in the structural organization and mineralization of developing enamel. The polypeptide is Amelogenin (AMEL) (Monodelphis domestica (Gray short-tailed opossum)).